A 516-amino-acid chain; its full sequence is Cytochrome P450 monooxygenase lcsI (516 aa).

Residues 20–42 (ICVAAGCAFALSLLYLYVRALYL) traverse the membrane as a helical segment. Asn131, Asn184, Asn415, Asn420, and Asn442 each carry an N-linked (GlcNAc...) asparagine glycan. Cys456 is a heme binding site.

The protein belongs to the cytochrome P450 family. Requires heme as cofactor.

The protein resides in the membrane. The protein operates within secondary metabolite biosynthesis. Its function is as follows. Cytochrome P450 monooxygenase; part of the gene cluster that mediates the biosynthesis of the lipopeptide antibiotics leucinostatins that show extensive biological activities, including antimalarial, antiviral, antibacterial, antifungal, and antitumor activities, as well as phytotoxic. Leucinostatin A contains nine amino acid residues, including the unusual amino acid 4-methyl-L-proline (MePro), 2-amino-6-hydroxy-4-methyl-8-oxodecanoic acid (AHyMeOA), 3-hydroxyleucine (HyLeu), alpha-aminoisobutyric acid (AIB), beta-Ala, a 4-methylhex-2-enoic acid at the N-terminus as well as a N1,N1-dimethylpropane-1,2-diamine (DPD) at the C-terminus. The biosynthesis of leucinostatins is probably initiated with the assembly of 4-methylhex-2-enoic acid by a reducing PKS. Two reducing polyketide synthases, lcsB and lcsC, have been identified in the cluster and it is not clear which is the one that assembles 4-methylhex-2-enoic acid since both contain KS, AT, DH, cMT, ER, KR and ACP domains. The polyketide residue might be transferred to the NRPS lcsA, mediated by two additional enzymes, the acyl-CoA ligase lcsD and the thioesterase lcsE. The linear polyketide carboxylic acid, which is released from PKS, is converted to a CoA thioester by lcsD, and then lcsE hydrolyzes the thiol bond and shuttles the polyketide intermediate to lcsA. The C domain of the first module catalyzed the condensation of 4-methylhex-2-enoic acid and MePro carried by domain A1, followed by successive condensations of nine amino acids to trigger the elongation of the linear peptide. A5 and A6 domains of lcsA are proposed to incorporate leucine, A2 AHyMeOA, and A3 incorporates HyLeu. A4, A7 and A8 incorporate AIB. The AHyMeOA in leucinostatin A activated by the A2 might be produced by the second PKS (lcsB or lcsC) present within the cluster. The MePro is probably produced via leucine cyclization and may originate from a separate pathway, independent of the cluster. Another nonproteinogenic amino acid, beta-Ala, could be produced by an aspartic acid decarboxylase also localized outside of the cluster. Two candidates are VFPBJ_01400 and VFPBJ_10476. The final peptide scaffold may be released by the NAD(P)H-dependent thioester reductase (TE) at the C-terminal region of lcsA. Transamination of the lcsA product by the transaminase lcsP may produce DPD at the C-terminus. Further hydroxylation steps performed alternatively by the cytochrome P450 monooxygenases lcsI, lcsK and lcsN then yield the non-methylated leucinostatins precursor. It is also possible that leucines can be hydroxylated prior to their incorporation into the peptide. Varying extents of methylation then lead to the formation of leucinostatins A and B. The sequence is that of Cytochrome P450 monooxygenase lcsI from Purpureocillium lilacinum (Paecilomyces lilacinus).